Reading from the N-terminus, the 117-residue chain is Conotoxin vil14.3 (117 aa).

Residues 1–22 (MGFRVLVLVVMATTSALPFTFS) form the signal peptide. A propeptide spanning residues 23–90 (EEPGRSPFRP…FAELSVGQRR (68 aa)) is cleaved from the precursor. The interval 53–79 (RADGQPPDMRQPEMRRPEMRRPEVRQP) is disordered. Positions 62 to 79 (RQPEMRRPEMRRPEVRQP) are enriched in basic and acidic residues. 2 disulfides stabilise this stretch: Cys96-Cys116 and Cys100-Cys112.

It belongs to the conotoxin R superfamily. As to expression, expressed by the venom duct.

The protein localises to the secreted. The chain is Conotoxin vil14.3 from Conus villepinii (Villepin's cone).